The following is a 247-amino-acid chain: LTTVISYFALVAFALVGVSYATPKASINGRIVGGEMTDISLIPYQVSVQTAISSYGFIHHCGGSIISPRWVVTAAHCAQKTNSAYQVYTGSSNKVEGGQAYRVKTIINHPLYDEETTDYDVALLELAEPIVMNYKTAAIELAEVGEEVETDAMAIVSGWGDTKNFGEEPNMLRSAEVPIFDQELCAYLNANHGVVTERMICAGYLAGGRDSCQGDSGGPLAVDGKLVGIVSWGVGCAQSNFPGVYGI.

The N-terminal stretch at 1 to 21 (LTTVISYFALVAFALVGVSYA) is a signal peptide. The propeptide at 22-30 (TPKASINGR) is activation peptide. Residues 31-247 (IVGGEMTDIS…QSNFPGVYGI (217 aa)) form the Peptidase S1 domain. The cysteines at positions 61 and 77 are disulfide-linked. Catalysis depends on charge relay system residues histidine 76 and aspartate 120. 2 disulfide bridges follow: cysteine 185–cysteine 201 and cysteine 212–cysteine 236. Serine 216 serves as the catalytic Charge relay system.

The protein belongs to the peptidase S1 family. As to expression, midgut.

It is found in the secreted. Its subcellular location is the extracellular space. The catalysed reaction is Preferential cleavage: Arg-|-Xaa, Lys-|-Xaa.. This chain is Trypsin, found in Simulium vittatum (Striped black fly).